The following is a 427-amino-acid chain: Trigger factor (427 aa).

Positions 163 to 248 constitute a PPIase FKBP-type domain; the sequence is GDTVVIDFVG…IHEVKAKEVP (86 aa).

It belongs to the FKBP-type PPIase family. Tig subfamily.

It localises to the cytoplasm. The catalysed reaction is [protein]-peptidylproline (omega=180) = [protein]-peptidylproline (omega=0). Involved in protein export. Acts as a chaperone by maintaining the newly synthesized protein in an open conformation. Functions as a peptidyl-prolyl cis-trans isomerase. In Streptococcus pneumoniae (strain 70585), this protein is Trigger factor.